Here is a 463-residue protein sequence, read N- to C-terminus: Argininosuccinate lyase (463 aa).

It belongs to the lyase 1 family. Argininosuccinate lyase subfamily.

Its subcellular location is the cytoplasm. It catalyses the reaction 2-(N(omega)-L-arginino)succinate = fumarate + L-arginine. It participates in amino-acid biosynthesis; L-arginine biosynthesis; L-arginine from L-ornithine and carbamoyl phosphate: step 3/3. The polypeptide is Argininosuccinate lyase (Bradyrhizobium sp. (strain ORS 278)).